A 574-amino-acid chain; its full sequence is Ribonuclease Y (574 aa).

Residues 1–21 (MSLLDLVLLLLVLGLGGVLLL) traverse the membrane as a helical segment. A KH domain is found at 264–327 (AVTVVPIPSD…EIARMALEEL (64 aa)). Residues 390 to 483 (VLKHSIQVAH…VAAADALSAA (94 aa)) form the HD domain.

The protein belongs to the RNase Y family.

The protein localises to the cell membrane. Functionally, endoribonuclease that initiates mRNA decay. The sequence is that of Ribonuclease Y from Thermus thermophilus (strain ATCC 27634 / DSM 579 / HB8).